We begin with the raw amino-acid sequence, 52 residues long: Defensin D2 (52 aa).

4 disulfide bridges follow: Cys8–Cys52, Cys19–Cys39, Cys25–Cys46, and Cys29–Cys48.

In terms of tissue distribution, distributed in the epidermal cell layer of leaves and in the subepidermal layer region of stems. Not in roots.

It is found in the secreted. Its subcellular location is the cell wall. Functionally, antimicrobial peptide. Active against Fusarium spp., Gram-positive and Gram-negative bacterial pathogens. This Spinacia oleracea (Spinach) protein is Defensin D2.